A 234-amino-acid polypeptide reads, in one-letter code: Structural PPIase-like protein L605 (234 aa).

The PPIase cyclophilin-type domain maps to 18–205; it reads YMDIVLNNEI…PTFSIGKCGA (188 aa).

The protein belongs to the cyclophilin-type PPIase family. Homotrimer.

The protein resides in the virion. It localises to the host cytoplasm. In Acanthamoeba polyphaga mimivirus (APMV), this protein is Structural PPIase-like protein L605.